Consider the following 341-residue polypeptide: RNA 3'-terminal phosphate cyclase (341 aa).

ATP-binding positions include Q102 and 283-287 (HLADQ). H308 serves as the catalytic Tele-AMP-histidine intermediate.

It belongs to the RNA 3'-terminal cyclase family. Type 1 subfamily.

Its subcellular location is the cytoplasm. The enzyme catalyses a 3'-end 3'-phospho-ribonucleotide-RNA + ATP = a 3'-end 2',3'-cyclophospho-ribonucleotide-RNA + AMP + diphosphate. Functionally, catalyzes the conversion of 3'-phosphate to a 2',3'-cyclic phosphodiester at the end of RNA. The mechanism of action of the enzyme occurs in 3 steps: (A) adenylation of the enzyme by ATP; (B) transfer of adenylate to an RNA-N3'P to produce RNA-N3'PP5'A; (C) and attack of the adjacent 2'-hydroxyl on the 3'-phosphorus in the diester linkage to produce the cyclic end product. The biological role of this enzyme is unknown but it is likely to function in some aspects of cellular RNA processing. The polypeptide is RNA 3'-terminal phosphate cyclase (Ectopseudomonas mendocina (strain ymp) (Pseudomonas mendocina)).